The chain runs to 562 residues: Ribonuclease Y (562 aa).

A helical transmembrane segment spans residues 1–21 (MNMLYFVLALLVGLAGGFFVG). Residues 108–129 (AAQDAARERETLSADRQETRRE) form a disordered region. The region spanning 252-312 (SVSVVPIPND…VRREVARHVL (61 aa)) is the KH domain. Residues 378-471 (VLKHSVQVAH…VAAADAISAA (94 aa)) enclose the HD domain.

It belongs to the RNase Y family.

The protein localises to the cell membrane. Functionally, endoribonuclease that initiates mRNA decay. The polypeptide is Ribonuclease Y (Deinococcus geothermalis (strain DSM 11300 / CIP 105573 / AG-3a)).